The sequence spans 565 residues: Glycine/sarcosine/dimethylglycine N-methyltransferase (565 aa).

The span at 1 to 10 shows a compositional bias: basic and acidic residues; sequence MTKSVDDLAR. Residues 1–34 form a disordered region; that stretch reads MTKSVDDLARGDQAGDEQDPVHREQQTFGDNPLE. Residues Tyr-45, Trp-53, Arg-62, Ala-86, Asp-107, 134 to 135, and Leu-152 contribute to the S-adenosyl-L-methionine site; that span reads DW. Substrate-binding residues include Asn-154, Arg-187, and Tyr-226.

Belongs to the class I-like SAM-binding methyltransferase superfamily. Glycine N-methyltransferase family. In terms of assembly, monomer.

It catalyses the reaction glycine + 2 S-adenosyl-L-methionine = N,N-dimethylglycine + 2 S-adenosyl-L-homocysteine + 2 H(+). The enzyme catalyses sarcosine + 2 S-adenosyl-L-methionine = glycine betaine + 2 S-adenosyl-L-homocysteine + 2 H(+). The catalysed reaction is glycine + S-adenosyl-L-methionine = sarcosine + S-adenosyl-L-homocysteine + H(+). It carries out the reaction sarcosine + S-adenosyl-L-methionine = N,N-dimethylglycine + S-adenosyl-L-homocysteine + H(+). It catalyses the reaction N,N-dimethylglycine + S-adenosyl-L-methionine = glycine betaine + S-adenosyl-L-homocysteine + H(+). Its pathway is amine and polyamine biosynthesis; betaine biosynthesis via glycine pathway; betaine from glycine: step 1/3. The protein operates within amine and polyamine biosynthesis; betaine biosynthesis via glycine pathway; betaine from glycine: step 2/3. It participates in amine and polyamine biosynthesis; betaine biosynthesis via glycine pathway; betaine from glycine: step 3/3. Catalyzes the methylation of glycine, sarcosine and dimethylglycine to sarcosine, dimethylglycine and betaine, respectively, with S-adenosylmethionine (AdoMet) acting as the methyl donor. Shows low level of activity on glycine when expressed in E.coli. The polypeptide is Glycine/sarcosine/dimethylglycine N-methyltransferase (Actinopolyspora halophila).